We begin with the raw amino-acid sequence, 193 residues long: ER membrane protein complex subunit 4 (193 aa).

The next 2 membrane-spanning stretches (helical) occupy residues 91-111 and 137-157; these read ILAY…TLML and LWPA…IGVY.

Belongs to the EMC4 family.

It is found in the endoplasmic reticulum membrane. The chain is ER membrane protein complex subunit 4 from Schizosaccharomyces pombe (strain 972 / ATCC 24843) (Fission yeast).